Here is a 199-residue protein sequence, read N- to C-terminus: Inner membrane protein E199L (199 aa).

Residues isoleucine 150–isoleucine 170 traverse the membrane as a helical segment.

Belongs to the asfivirus E199L family. Interacts with host PYCR2; this interaction results in autophagy activation. In terms of processing, contains intramolecular disulfide bonds.

It is found in the virion membrane. Its subcellular location is the host membrane. Functionally, essential for viral fusion with host endosomal membrane and core release. Not required for virus morphogenesis and egress. Induces complete autophagy through the interaction with and down-regulation of host PYCR2. This chain is Inner membrane protein E199L, found in Ornithodoros (relapsing fever ticks).